The following is a 91-amino-acid chain: Non-specific lipid-transfer protein 1 (91 aa).

4 disulfides stabilise this stretch: Cys-3–Cys-50, Cys-13–Cys-27, Cys-28–Cys-73, and Cys-48–Cys-87.

The protein belongs to the plant LTP family.

Functionally, plant non-specific lipid-transfer proteins transfer phospholipids as well as galactolipids across membranes. May play a role in wax or cutin deposition in the cell walls of expanding epidermal cells and certain secretory tissues. This Prunus domestica (Garden plum) protein is Non-specific lipid-transfer protein 1.